The following is a 428-amino-acid chain: Enolase (428 aa).

Residue glutamine 162 participates in (2R)-2-phosphoglycerate binding. Glutamate 204 (proton donor) is an active-site residue. 3 residues coordinate Mg(2+): aspartate 241, glutamate 283, and aspartate 310. 4 residues coordinate (2R)-2-phosphoglycerate: lysine 335, arginine 364, serine 365, and lysine 386. Lysine 335 (proton acceptor) is an active-site residue.

The protein belongs to the enolase family. Mg(2+) serves as cofactor.

It is found in the cytoplasm. Its subcellular location is the secreted. It localises to the cell surface. The catalysed reaction is (2R)-2-phosphoglycerate = phosphoenolpyruvate + H2O. It participates in carbohydrate degradation; glycolysis; pyruvate from D-glyceraldehyde 3-phosphate: step 4/5. Functionally, catalyzes the reversible conversion of 2-phosphoglycerate (2-PG) into phosphoenolpyruvate (PEP). It is essential for the degradation of carbohydrates via glycolysis. This Rhodococcus erythropolis (strain PR4 / NBRC 100887) protein is Enolase.